The chain runs to 291 residues: Tetrahydromethanopterin:alpha-L-glutamate ligase (291 aa).

In terms of domain architecture, ATP-grasp spans 101-286; sequence SVFLELNNLP…IADKLLEKII (186 aa). ATP is bound by residues Lys136, 175 to 187, and Arg203; that span reads QEFIKPVRNEHRD. Asp247, Glu259, and Asn261 together coordinate Mg(2+). Mn(2+) contacts are provided by Asp247, Glu259, and Asn261.

The protein belongs to the RimK family. MptN subfamily. In terms of assembly, homodimer. It depends on Mg(2+) as a cofactor. Mn(2+) serves as cofactor.

It catalyses the reaction 5,6,7,8-tetrahydromethanopterin + L-glutamate + ATP = 5,6,7,8-tetrahydrosarcinapterin + ADP + phosphate + H(+). The protein operates within cofactor biosynthesis; 5,6,7,8-tetrahydrosarcinapterin biosynthesis. In terms of biological role, catalyzes the ATP or GTP-dependent addition of one L-glutamate molecule to tetrahydromethanopterin, producing tetrahydrosarcinapterin. This chain is Tetrahydromethanopterin:alpha-L-glutamate ligase (mptN), found in Methanocaldococcus jannaschii (strain ATCC 43067 / DSM 2661 / JAL-1 / JCM 10045 / NBRC 100440) (Methanococcus jannaschii).